A 59-amino-acid polypeptide reads, in one-letter code: MKAFYGILIIFILISMIHLSQQVFINATCTLTSQCRPKCLEAIGRPNSKCINRKCKCYP.

Residues 1–22 form the signal peptide; that stretch reads MKAFYGILIIFILISMIHLSQQ. Cystine bridges form between cysteine 29-cysteine 50, cysteine 35-cysteine 55, and cysteine 39-cysteine 57.

It belongs to the short scorpion toxin superfamily. Potassium channel inhibitor family. Alpha-KTx 04 subfamily. In terms of tissue distribution, expressed by the venom gland.

It is found in the secreted. Potently blocks Kv1.1/KCNA1 (85%), Kv1.2/KCNA2 (91%), Kv1.3/KCNA3 (89%), Kv1.6/KCNA6 (94%), and Shaker (97%). This is Putative potassium channel toxin Ts24 from Tityus serrulatus (Brazilian scorpion).